A 274-amino-acid chain; its full sequence is NH(3)-dependent NAD(+) synthetase (274 aa).

Position 46–53 (46–53 (GISGGQDS)) interacts with ATP. Position 52 (Asp-52) interacts with Mg(2+). Arg-140 is a deamido-NAD(+) binding site. Thr-160 contacts ATP. A Mg(2+)-binding site is contributed by Glu-165. Residues Lys-173 and Asp-180 each contribute to the deamido-NAD(+) site. ATP-binding residues include Lys-189 and Thr-211. 260–261 (HK) is a binding site for deamido-NAD(+).

The protein belongs to the NAD synthetase family. In terms of assembly, homodimer.

The catalysed reaction is deamido-NAD(+) + NH4(+) + ATP = AMP + diphosphate + NAD(+) + H(+). It participates in cofactor biosynthesis; NAD(+) biosynthesis; NAD(+) from deamido-NAD(+) (ammonia route): step 1/1. Catalyzes the ATP-dependent amidation of deamido-NAD to form NAD. Uses ammonia as a nitrogen source. This chain is NH(3)-dependent NAD(+) synthetase, found in Pectobacterium atrosepticum (strain SCRI 1043 / ATCC BAA-672) (Erwinia carotovora subsp. atroseptica).